We begin with the raw amino-acid sequence, 163 residues long: MMCTAKKCGIRFQPPAIILIYESEIKGKIRQRIMPVRNFSKFSDCTRAAEQLKNNPRHKSYLEQVSLRQLEKLFSFLRGYLSGQSLAETMEQIQRETTIDPEEDLNKLDDKELAKRKSIMDELFEKNQKKKDDPNFVYDIEVEFPQDDQLQSCGWDTESADEF.

Belongs to the CEP19 family. In terms of assembly, interacts with CEP43; this interaction is required for its localization to the mother centriole. Interacts (via residues 121-150) with RABL2B. Interacts (via C-terminus) with CEP350; this interaction is required for its localization to the mother centriole.

It localises to the cytoplasm. Its subcellular location is the cytoskeleton. The protein localises to the microtubule organizing center. The protein resides in the centrosome. It is found in the centriole. It localises to the spindle pole. Its subcellular location is the cilium basal body. In terms of biological role, required for ciliation. Recruits the RABL2B GTPase to the ciliary base to initiate ciliation. After specifically capturing the activated GTP-bound RABL2B, the CEP19-RABL2B complex binds intraflagellar transport (IFT) complex B from the large pool pre-docked at the base of the cilium and thus triggers its entry into the cilia. Involved in the early steps in cilia formation by recruiting the ciliary vesicles (CVs) to the distal end of the mother centriole where they fuse to initiate cilium assembly. Involved in microtubule (MT) anchoring to the centrosomes. This chain is Centrosomal protein of 19 kDa (CEP19), found in Homo sapiens (Human).